A 298-amino-acid chain; its full sequence is uncharacterized protein (298 aa).

The protein localises to the cytoplasm. It localises to the nucleus. This is an uncharacterized protein from Schizosaccharomyces pombe (strain 972 / ATCC 24843) (Fission yeast).